The primary structure comprises 138 residues: Putative nickel-responsive regulator (138 aa).

Ni(2+) is bound by residues His-78, His-89, His-91, and Cys-97.

It belongs to the transcriptional regulatory CopG/NikR family. It depends on Ni(2+) as a cofactor.

In terms of biological role, transcriptional regulator. In Thermococcus onnurineus (strain NA1), this protein is Putative nickel-responsive regulator.